A 644-amino-acid polypeptide reads, in one-letter code: Exoribonuclease 2 (644 aa).

The RNB domain maps to 189–516; the sequence is RQDLTALNFV…NHRLLKAAIK (328 aa). In terms of domain architecture, S1 motif spans 561 to 643; it reads DTRFAAEIID…ETRSIIARPV (83 aa).

It belongs to the RNR ribonuclease family. RNase II subfamily.

The protein localises to the cytoplasm. The catalysed reaction is Exonucleolytic cleavage in the 3'- to 5'-direction to yield nucleoside 5'-phosphates.. Its function is as follows. Involved in mRNA degradation. Hydrolyzes single-stranded polyribonucleotides processively in the 3' to 5' direction. The polypeptide is Exoribonuclease 2 (Escherichia fergusonii (strain ATCC 35469 / DSM 13698 / CCUG 18766 / IAM 14443 / JCM 21226 / LMG 7866 / NBRC 102419 / NCTC 12128 / CDC 0568-73)).